The chain runs to 156 residues: MKIQLVAVGTKMPKWVEEGYKEYSRRFPKDMPLELVEITAGKRGKNADIARILQKEGEAMLAAVPKGNRIVTLDIPGKRWDTEQLAEQLEAWKLDARDVSILIGGPEGLAPACKAAADQSWSLSPLTLPHPLVRVVMAESLYRAWSITANHPYHRE.

Residues L73, G104, and 123–128 (LSPLTL) each bind S-adenosyl-L-methionine.

The protein belongs to the RNA methyltransferase RlmH family. In terms of assembly, homodimer.

It is found in the cytoplasm. The catalysed reaction is pseudouridine(1915) in 23S rRNA + S-adenosyl-L-methionine = N(3)-methylpseudouridine(1915) in 23S rRNA + S-adenosyl-L-homocysteine + H(+). Functionally, specifically methylates the pseudouridine at position 1915 (m3Psi1915) in 23S rRNA. The chain is Ribosomal RNA large subunit methyltransferase H from Aliivibrio fischeri (strain ATCC 700601 / ES114) (Vibrio fischeri).